A 232-amino-acid chain; its full sequence is Rhamnogalacturonan acetylesterase RhgT (232 aa).

Serine 14 (nucleophile) is an active-site residue. Catalysis depends on residues glutamate 191 and histidine 195.

This sequence belongs to the 'GDSL' lipolytic enzyme family. As to quaternary structure, monomer.

Its activity is regulated as follows. Almost completely inhibited by diethylpyrocarbonate at 5 mM and completely inhibited by phenylmethylsulfonyl fluoride (PMSF) at 50 mM. Dimethyl phosphite achieves only a 53% inhibition. Also inhibited by metal ions (magnesium, manganese and calcium) and chelating agent (EDTA) at the same level. May play a role in the degradation of type I rhamnogalacturonan derived from plant cell walls. This enzyme has a broad substrate specificity, and shows strong preference for glucose pentaacetate, beta-naphthylacetate, and p-nitrophenyl acetate (pNPA). Also active toward acetylated xylan. The protein is Rhamnogalacturonan acetylesterase RhgT (rhgT) of Bacillus subtilis (strain 168).